The following is a 430-amino-acid chain: UDP-N-acetylglucosamine 1-carboxyvinyltransferase 1 (430 aa).

Phosphoenolpyruvate is bound at residue 22–23; it reads KN. R93 is a binding site for UDP-N-acetyl-alpha-D-glucosamine. C117 functions as the Proton donor in the catalytic mechanism. C117 carries the post-translational modification 2-(S-cysteinyl)pyruvic acid O-phosphothioketal. UDP-N-acetyl-alpha-D-glucosamine-binding positions include 122–126, D305, and V327; that span reads RPVDL.

This sequence belongs to the EPSP synthase family. MurA subfamily.

The protein resides in the cytoplasm. The enzyme catalyses phosphoenolpyruvate + UDP-N-acetyl-alpha-D-glucosamine = UDP-N-acetyl-3-O-(1-carboxyvinyl)-alpha-D-glucosamine + phosphate. It participates in cell wall biogenesis; peptidoglycan biosynthesis. In terms of biological role, cell wall formation. Adds enolpyruvyl to UDP-N-acetylglucosamine. The polypeptide is UDP-N-acetylglucosamine 1-carboxyvinyltransferase 1 (Listeria monocytogenes serotype 4b (strain F2365)).